The sequence spans 35 residues: Potassium channel toxin alpha-KTx 6.15 (35 aa).

Intrachain disulfides connect Cys-3/Cys-24, Cys-9/Cys-29, Cys-13/Cys-31, and Cys-19/Cys-34.

It belongs to the short scorpion toxin superfamily. Potassium channel inhibitor family. Alpha-KTx 06 subfamily. As to expression, expressed by the venom gland.

It is found in the secreted. Blocks voltage-gated potassium channels rKv1.1/KCNA1 (IC(50)=13 nM), rKv1.2/KCNA2 (IC(50)=16 nM) and rKv1.3/KCNA3 (IC(50)=2 nM). The polypeptide is Potassium channel toxin alpha-KTx 6.15 (Hemiscorpius lepturus (Scorpion)).